The chain runs to 383 residues: F-box/kelch-repeat protein At2g22030 (383 aa).

In terms of domain architecture, F-box spans 23-71 (SLLFSSLPYDVVLNCLARVSRRYYPNLSCVSKSFQSLVRSPELAHMRSL). Kelch repeat units follow at residues 130–175 (KIYF…VVNG), 176–220 (KLYV…LMRY), and 269–317 (GVCV…GMVD).

The sequence is that of F-box/kelch-repeat protein At2g22030 from Arabidopsis thaliana (Mouse-ear cress).